The chain runs to 396 residues: N-acyl-phosphatidylethanolamine-hydrolyzing phospholipase D (396 aa).

N-acetylmethionine is present on Met-1. Composition is skewed to polar residues over residues 1–12 (MDENENSQSPAP) and 26–37 (NSVQNSGGSESS). Residues 1–41 (MDENENSQSPAPSHQYPKETLRKRQNSVQNSGGSESSRLSR) are disordered. Zn(2+) is bound by residues His-185 and His-187. Tyr-188 is a binding site for an N-acyl-1,2-diacyl-sn-glycero-3-phosphoethanolamine. Zn(2+) is bound by residues Asp-189, His-190, and His-253. A deoxycholate-binding site is contributed by Lys-256. Asp-284 provides a ligand contact to Zn(2+). His-321 contacts an N-acyl-1,2-diacyl-sn-glycero-3-phosphoethanolamine. His-343 serves as a coordination point for Zn(2+). Ala-348 is a binding site for deoxycholate.

It belongs to the NAPE-PLD family. Homodimer. Bile acids promote the assembly of inactive monomers into an active dimer and enable catalysis. Zn(2+) is required as a cofactor. In terms of tissue distribution, widely expressed. Highest expression in brain, kidney and testis (at protein level). Expressed in adipose tissue (at protein level).

The protein resides in the golgi apparatus membrane. The protein localises to the early endosome membrane. It is found in the nucleus envelope. Its subcellular location is the nucleus. It localises to the nucleoplasm. The catalysed reaction is an N-acyl-1,2-diacyl-sn-glycero-3-phosphoethanolamine + H2O = an N-acylethanolamine + a 1,2-diacyl-sn-glycero-3-phosphate + H(+). It carries out the reaction N-butanoyl-1-hexadecanoyl-2-(9Z,12Z-octadecadienoyl)-sn-glycero-3-phosphoethanolamine + H2O = N-butanoyl ethanolamine + 1-hexadecanoyl-2-(9Z,12Z-octadecadienoyl)-sn-glycero-3-phosphate + H(+). The enzyme catalyses N-hexanoyl-1-hexadecanoyl-2-(9Z,12Z-octadecadienoyl)-sn-glycero-3-phosphoethanolamine + H2O = N-hexanoyl ethanolamine + 1-hexadecanoyl-2-(9Z,12Z-octadecadienoyl)-sn-glycero-3-phosphate + H(+). It catalyses the reaction N-octanoyl-1-hexadecanoyl-2-(9Z,12Z-octadecadienoyl)-sn-glycero-3-phosphoethanolamine + H2O = N-octanoyl ethanolamine + 1-hexadecanoyl-2-(9Z,12Z-octadecadienoyl)-sn-glycero-3-phosphate + H(+). The catalysed reaction is N-decanoyl-1-hexadecanoyl-2-(9Z,12Z-octadecadienoyl)-sn-glycero-3-phosphoethanolamine + H2O = N-decanoyl ethanolamine + 1-hexadecanoyl-2-(9Z,12Z-octadecadienoyl)-sn-glycero-3-phosphate + H(+). It carries out the reaction N-dodecanoyl-1,2-di-(9Z-octadecenoyl)-sn-glycero-3-phosphoethanolamine + H2O = N-dodecanoylethanolamine + 1,2-di-(9Z-octadecenoyl)-sn-glycero-3-phosphate + H(+). The enzyme catalyses N-tetradecanoyl-1,2-di-(9Z-octadecenoyl)-sn-glycero-3-phosphoethanolamine + H2O = N-tetradecanoylethanolamine + 1,2-di-(9Z-octadecenoyl)-sn-glycero-3-phosphate + H(+). It catalyses the reaction N-hexadecanoyl-1,2-di-(9Z-octadecenoyl)-sn-glycero-3-phosphoethanolamine + H2O = N-hexadecanoylethanolamine + 1,2-di-(9Z-octadecenoyl)-sn-glycero-3-phosphate + H(+). The catalysed reaction is N,1-dihexadecanoyl-2-(9Z,12Z-octadecadienoyl)-sn-glycero-3-phosphoethanolamine + H2O = 1-hexadecanoyl-2-(9Z,12Z-octadecadienoyl)-sn-glycero-3-phosphate + N-hexadecanoylethanolamine + H(+). It carries out the reaction N-octadecanoyl-1,2-di-(9Z-octadecenoyl)-sn-glycero-3-phosphoethanolamine + H2O = N-octadecanoyl ethanolamine + 1,2-di-(9Z-octadecenoyl)-sn-glycero-3-phosphate + H(+). The enzyme catalyses N,1,2-tri-(9Z-octadecenoyl)-sn-glycero-3-phosphoethanolamine + H2O = N-(9Z-octadecenoyl) ethanolamine + 1,2-di-(9Z-octadecenoyl)-sn-glycero-3-phosphate + H(+). It catalyses the reaction N-(5Z,8Z,11Z,14Z-eicosatetraenoyl)-1,2-diacyl-sn-glycero-3-phosphoethanolamine + H2O = N-(5Z,8Z,11Z,14Z-eicosatetraenoyl)-ethanolamine + a 1,2-diacyl-sn-glycero-3-phosphate + H(+). The catalysed reaction is N-(5Z,8Z,11Z,14Z-eicosatetraenoyl)-1,2-di-(9Z-octadecenoyl)-sn-glycero-3-phosphoethanolamine + H2O = N-(5Z,8Z,11Z,14Z-eicosatetraenoyl)-ethanolamine + 1,2-di-(9Z-octadecenoyl)-sn-glycero-3-phosphate + H(+). It carries out the reaction 1-O-(1Z-octadecenoyl)-2-(9Z-octadecenoyl)-sn-glycero-3-phospho-N-hexadecanoyl-ethanolamine + H2O = 1-O-(1Z-octadecenoyl)-2-(9Z-octadecenoyl)-sn-glycero-3-phosphate + N-hexadecanoylethanolamine + H(+). The enzyme catalyses N,1-diacyl-sn-glycero-3-phosphoethanolamine + H2O = an N-acylethanolamine + a 1-acyl-sn-glycero-3-phosphate + H(+). It catalyses the reaction N,1-dihexadecanoyl-sn-glycero-3-phosphoethanolamine + H2O = N-hexadecanoylethanolamine + 1-hexadecanoyl-sn-glycero-3-phosphate + H(+). The catalysed reaction is N-(5Z,8Z,11Z,14Z-eicosatetraenoyl)-1-(9Z-octadecenoyl)-sn-glycero-3-phosphoethanolamine + H2O = N-(5Z,8Z,11Z,14Z-eicosatetraenoyl)-ethanolamine + 1-(9Z-octadecenoyl)-sn-glycero-3-phosphate + H(+). Its activity is regulated as follows. Activated by divalent cations. Activated by bile acids. Activated by membrane phospholipids such as phosphatidylethanolamines. Inhibited by cardiolipins. Its function is as follows. D-type phospholipase that hydrolyzes N-acyl-phosphatidylethanolamines (NAPEs) to produce bioactive N-acylethanolamines/fatty acid ethanolamides (NAEs/FAEs) and phosphatidic acid. Cleaves the terminal phosphodiester bond of diacyl- and alkenylacyl-NAPEs, primarily playing a role in the generation of long-chain saturated and monounsaturated NAEs in the brain. May control NAPE homeostasis in dopaminergic neuron membranes and regulate neuron survival, partly through RAC1 activation. As a regulator of lipid metabolism in the adipose tissue, mediates the crosstalk between adipocytes, gut microbiota and immune cells to control body temperature and weight. In particular, regulates energy homeostasis by promoting cold-induced brown or beige adipocyte differentiation program to generate heat from fatty acids and glucose. Has limited D-type phospholipase activity toward N-acyl lyso-NAPEs. The sequence is that of N-acyl-phosphatidylethanolamine-hydrolyzing phospholipase D (Napepld) from Rattus norvegicus (Rat).